The primary structure comprises 194 residues: Small ribosomal subunit protein uS4c (194 aa).

The disordered stretch occupies residues 1 to 29 (RFKKIRRLGTLPGLTSKRPRSGSDLKNPL). The S4 RNA-binding domain occupies 82-143 (MRLDNILFRL…KQRSKALIQN (62 aa)).

This sequence belongs to the universal ribosomal protein uS4 family. As to quaternary structure, part of the 30S ribosomal subunit. Contacts protein S5. The interaction surface between S4 and S5 is involved in control of translational fidelity.

The protein localises to the plastid. It is found in the chloroplast. Functionally, one of the primary rRNA binding proteins, it binds directly to 16S rRNA where it nucleates assembly of the body of the 30S subunit. In terms of biological role, with S5 and S12 plays an important role in translational accuracy. The polypeptide is Small ribosomal subunit protein uS4c (rps4) (Furcraea foetida (Mauritius hemp)).